Reading from the N-terminus, the 655-residue chain is Probable replication factor A 73 kDa subunit (655 aa).

The disordered stretch occupies residues 195-217 (NRAAAPEATRARAVPPPARRTAS). Over residues 196–207 (RAAAPEATRARA) the composition is skewed to low complexity. A DNA-binding region (OB) is located at residues 236 to 326 (FKIHGMVSRK…TLRSDSIIEA (91 aa)). Residues 518–539 (CASEGCQKKLVGENGDYRCEKC) form a C4-type zinc finger.

This sequence belongs to the replication factor A protein 1 family. As to quaternary structure, component of the heterotrimeric canonical replication protein A complex (RPA).

Its subcellular location is the nucleus. Its function is as follows. As part of the heterotrimeric replication protein A complex (RPA/RP-A), binds and stabilizes single-stranded DNA intermediates, that form during DNA replication or upon DNA stress. It prevents their reannealing and in parallel, recruits and activates different proteins and complexes involved in DNA metabolism. Thereby, it plays an essential role both in DNA replication and the cellular response to DNA damage. This Caenorhabditis elegans protein is Probable replication factor A 73 kDa subunit.